The chain runs to 187 residues: Elongation factor P (187 aa).

It belongs to the elongation factor P family.

The protein resides in the cytoplasm. The protein operates within protein biosynthesis; polypeptide chain elongation. Involved in peptide bond synthesis. Stimulates efficient translation and peptide-bond synthesis on native or reconstituted 70S ribosomes in vitro. Probably functions indirectly by altering the affinity of the ribosome for aminoacyl-tRNA, thus increasing their reactivity as acceptors for peptidyl transferase. The protein is Elongation factor P of Tolumonas auensis (strain DSM 9187 / NBRC 110442 / TA 4).